Reading from the N-terminus, the 130-residue chain is Small ribosomal subunit protein uS11c (130 aa).

Belongs to the universal ribosomal protein uS11 family. As to quaternary structure, part of the 30S ribosomal subunit.

It is found in the plastid. The protein localises to the chloroplast. The polypeptide is Small ribosomal subunit protein uS11c (Nephroselmis olivacea (Green alga)).